The primary structure comprises 268 residues: L-aspartate dehydrogenase (268 aa).

NAD(+) contacts are provided by A125 and N191. H221 is an active-site residue.

The protein belongs to the L-aspartate dehydrogenase family.

It catalyses the reaction L-aspartate + NADP(+) + H2O = oxaloacetate + NH4(+) + NADPH + H(+). It carries out the reaction L-aspartate + NAD(+) + H2O = oxaloacetate + NH4(+) + NADH + H(+). Its pathway is cofactor biosynthesis; NAD(+) biosynthesis; iminoaspartate from L-aspartate (dehydrogenase route): step 1/1. Its function is as follows. Specifically catalyzes the NAD or NADP-dependent dehydrogenation of L-aspartate to iminoaspartate. The chain is L-aspartate dehydrogenase from Brucella anthropi (strain ATCC 49188 / DSM 6882 / CCUG 24695 / JCM 21032 / LMG 3331 / NBRC 15819 / NCTC 12168 / Alc 37) (Ochrobactrum anthropi).